Consider the following 491-residue polypeptide: Lysine--tRNA ligase (491 aa).

Mg(2+) contacts are provided by E399 and E406.

Belongs to the class-II aminoacyl-tRNA synthetase family. In terms of assembly, homodimer. The cofactor is Mg(2+).

Its subcellular location is the cytoplasm. It catalyses the reaction tRNA(Lys) + L-lysine + ATP = L-lysyl-tRNA(Lys) + AMP + diphosphate. The polypeptide is Lysine--tRNA ligase (Chloroflexus aurantiacus (strain ATCC 29366 / DSM 635 / J-10-fl)).